The sequence spans 90 residues: Secretoglobin family 1D member 1 (90 aa).

The signal sequence occupies residues 1 to 21; sequence MRLSVCLLLLTLALCCYRANA.

Heterodimer of a lipophilin A and a lipophilin C (mammaglobin B) monomer associated head to head. In terms of tissue distribution, expressed in lachrymal gland, thymus, kidney, testis, ovary and salivary gland.

Its subcellular location is the secreted. Its function is as follows. May bind androgens and other steroids, may also bind estramustine, a chemotherapeutic agent used for prostate cancer. May be under transcriptional regulation of steroid hormones. The protein is Secretoglobin family 1D member 1 (SCGB1D1) of Homo sapiens (Human).